Consider the following 247-residue polypeptide: Probable transcriptional regulatory protein Gura_1416 (247 aa).

This sequence belongs to the TACO1 family.

It localises to the cytoplasm. The polypeptide is Probable transcriptional regulatory protein Gura_1416 (Geotalea uraniireducens (strain Rf4) (Geobacter uraniireducens)).